The primary structure comprises 387 residues: Succinate--CoA ligase [ADP-forming] subunit beta (387 aa).

The region spanning 9–244 (KHILSKFGVN…YDEEIKEEIE (236 aa)) is the ATP-grasp domain. ATP-binding positions include Lys-46, 53-55 (GRG), Glu-99, Cys-102, and Glu-107. Mg(2+) is bound by residues Asn-199 and Asp-213. Residues Asn-264 and 321–323 (GIM) contribute to the substrate site.

This sequence belongs to the succinate/malate CoA ligase beta subunit family. In terms of assembly, heterotetramer of two alpha and two beta subunits. It depends on Mg(2+) as a cofactor.

It carries out the reaction succinate + ATP + CoA = succinyl-CoA + ADP + phosphate. The catalysed reaction is GTP + succinate + CoA = succinyl-CoA + GDP + phosphate. The protein operates within carbohydrate metabolism; tricarboxylic acid cycle; succinate from succinyl-CoA (ligase route): step 1/1. Its function is as follows. Succinyl-CoA synthetase functions in the citric acid cycle (TCA), coupling the hydrolysis of succinyl-CoA to the synthesis of either ATP or GTP and thus represents the only step of substrate-level phosphorylation in the TCA. The beta subunit provides nucleotide specificity of the enzyme and binds the substrate succinate, while the binding sites for coenzyme A and phosphate are found in the alpha subunit. This is Succinate--CoA ligase [ADP-forming] subunit beta from Ehrlichia chaffeensis (strain ATCC CRL-10679 / Arkansas).